A 1882-amino-acid chain; its full sequence is RNA2 polyprotein (1882 aa).

A run of 2 repeats spans residues 554 to 606 (SWSS…LPSF) and 607 to 659 (SWSS…LPSF). The interval 554-698 (SWSSPLPLFA…VSDEFMDVLP (145 aa)) is 2.5 X tandem repeats, Pro-rich. One copy of the 3; truncated and approximate repeat lies at 660-698 (SWSSPLPLFASFKVNRGACFLQVLPARKVVSDEFMDVLP). Polar residues-rich tracts occupy residues 1289-1303 (SSLFTGSVDRTQQGT) and 1838-1847 (PSATLGTNNP). Disordered stretches follow at residues 1289–1320 (SSLFTGSVDRTQQGTGAFEDPGFLPPRNSSVQ) and 1838–1863 (PSATLGTNNPVGRPPENVDTGGPGGQ).

Belongs to the nepoviruses RNA2 polyprotein family. Post-translationally, specific enzymatic cleavages in vivo by the P1 encoded 3C-like protease yield mature proteins.

The protein resides in the host cell junction. Its subcellular location is the host plasmodesma. The protein localises to the virion. Functionally, protein 2A: implicated in RNA2 replication. Could also be required for nematode transmission of the virus. Its function is as follows. Transports viral genome to neighboring plant cells directly through plasmosdesmata, without any budding. The movement protein allows efficient cell to cell propagation, by bypassing the host cell wall barrier. Acts by forming a tubular structure at the host plasmodesmata, enlarging it enough to allow free passage of virion capsids. This is RNA2 polyprotein from Tomato ringspot virus (isolate raspberry) (ToRSV).